The primary structure comprises 337 residues: tRNA N6-adenosine threonylcarbamoyltransferase (337 aa).

Fe cation-binding residues include histidine 111 and histidine 115. Substrate contacts are provided by residues 134–138 (LVSGG), aspartate 167, glycine 180, and asparagine 272. Aspartate 300 is a binding site for Fe cation.

This sequence belongs to the KAE1 / TsaD family. Fe(2+) serves as cofactor.

The protein localises to the cytoplasm. The enzyme catalyses L-threonylcarbamoyladenylate + adenosine(37) in tRNA = N(6)-L-threonylcarbamoyladenosine(37) in tRNA + AMP + H(+). Its function is as follows. Required for the formation of a threonylcarbamoyl group on adenosine at position 37 (t(6)A37) in tRNAs that read codons beginning with adenine. Is involved in the transfer of the threonylcarbamoyl moiety of threonylcarbamoyl-AMP (TC-AMP) to the N6 group of A37, together with TsaE and TsaB. TsaD likely plays a direct catalytic role in this reaction. In Escherichia coli O127:H6 (strain E2348/69 / EPEC), this protein is tRNA N6-adenosine threonylcarbamoyltransferase.